A 535-amino-acid chain; its full sequence is GMP synthase [glutamine-hydrolyzing] (535 aa).

The 207-residue stretch at 4 to 210 (KILILDFGSQ…VHEICKCKPD (207 aa)) folds into the Glutamine amidotransferase type-1 domain. The Nucleophile role is filled by Cys-85. Residues His-184 and Glu-186 contribute to the active site. The GMPS ATP-PPase domain maps to 211 to 403 (WVMGDYIAEA…LGLPREMVYR (193 aa)). 238 to 244 (SGGVDSS) provides a ligand contact to ATP.

As to quaternary structure, homodimer.

The enzyme catalyses XMP + L-glutamine + ATP + H2O = GMP + L-glutamate + AMP + diphosphate + 2 H(+). It functions in the pathway purine metabolism; GMP biosynthesis; GMP from XMP (L-Gln route): step 1/1. Its function is as follows. Catalyzes the synthesis of GMP from XMP. The chain is GMP synthase [glutamine-hydrolyzing] from Polynucleobacter necessarius subsp. necessarius (strain STIR1).